Reading from the N-terminus, the 500-residue chain is L-arabinose isomerase (500 aa).

Glu306, Glu333, His350, and His450 together coordinate Mn(2+).

It belongs to the arabinose isomerase family. Homohexamer. Mn(2+) is required as a cofactor.

The catalysed reaction is beta-L-arabinopyranose = L-ribulose. It functions in the pathway carbohydrate degradation; L-arabinose degradation via L-ribulose; D-xylulose 5-phosphate from L-arabinose (bacterial route): step 1/3. Catalyzes the conversion of L-arabinose to L-ribulose. The polypeptide is L-arabinose isomerase (Salmonella paratyphi A (strain ATCC 9150 / SARB42)).